A 304-amino-acid chain; its full sequence is N-acetylmuramic acid 6-phosphate etherase (304 aa).

An SIS domain is found at 58–221; it reads IAERIHRGGR…STGVMIKLGK (164 aa). Glutamate 86 functions as the Proton donor in the catalytic mechanism. The active site involves glutamate 117.

This sequence belongs to the GCKR-like family. MurNAc-6-P etherase subfamily. As to quaternary structure, homodimer.

It catalyses the reaction N-acetyl-D-muramate 6-phosphate + H2O = N-acetyl-D-glucosamine 6-phosphate + (R)-lactate. It functions in the pathway amino-sugar metabolism; N-acetylmuramate degradation. Functionally, specifically catalyzes the cleavage of the D-lactyl ether substituent of MurNAc 6-phosphate, producing GlcNAc 6-phosphate and D-lactate. This chain is N-acetylmuramic acid 6-phosphate etherase, found in Clostridium beijerinckii (strain ATCC 51743 / NCIMB 8052) (Clostridium acetobutylicum).